We begin with the raw amino-acid sequence, 269 residues long: Ribonuclease HII (269 aa).

The region spanning 83-269 (YLIAGVDEVG…HRMSFLTNIL (187 aa)) is the RNase H type-2 domain. A divalent metal cation-binding residues include Asp89, Glu90, and Asp185.

Belongs to the RNase HII family. Mn(2+) is required as a cofactor. The cofactor is Mg(2+).

The protein localises to the cytoplasm. The catalysed reaction is Endonucleolytic cleavage to 5'-phosphomonoester.. Functionally, endonuclease that specifically degrades the RNA of RNA-DNA hybrids. The protein is Ribonuclease HII of Clostridium botulinum (strain Hall / ATCC 3502 / NCTC 13319 / Type A).